The sequence spans 374 residues: Transcription termination factor 1, mitochondrial (374 aa).

A mitochondrion-targeting transit peptide spans 1 to 37 (MASRNIWRVRRNFLFDLRGWVPQYSAEVFLKSIPFRP). Interaction with DNA stretches follow at residues 146–147 (RS), 224–228 (QSTKR), 301–308 (SEKKFNDK), 332–335 (SIHT), and 361–368 (SQRRYEAK).

This sequence belongs to the mTERF family. As to quaternary structure, monomer. Post-translationally, is a phosphoprotein. While the DNA-binding activity is unaffected by the phosphorylation/dephosphorylation state, only the phosphorylated form of the protein is active for termination activity. Functioning seems to be regulated by phosphorylation.

The protein resides in the mitochondrion. Its function is as follows. Transcription termination factor. Binds to a 28 bp region within the tRNA(Leu(uur)) gene at a position immediately adjacent to and downstream of the 16S rRNA gene; this region comprises a tridecamer sequence critical for directing accurate termination. Binds DNA along the major grove and promotes DNA bending and partial unwinding. Promotes base flipping. Transcription termination activity appears to be polarized with highest specificity for transcripts initiated on the light strand. The polypeptide is Transcription termination factor 1, mitochondrial (Mterf1) (Rattus norvegicus (Rat)).